We begin with the raw amino-acid sequence, 130 residues long: Small ribosomal subunit protein eS8 (130 aa).

Belongs to the eukaryotic ribosomal protein eS8 family. As to quaternary structure, part of the 30S ribosomal subunit.

The polypeptide is Small ribosomal subunit protein eS8 (Ignicoccus hospitalis (strain KIN4/I / DSM 18386 / JCM 14125)).